Here is a 565-residue protein sequence, read N- to C-terminus: Phosphoenolpyruvate-protein phosphotransferase (565 aa).

His-191 acts as the Tele-phosphohistidine intermediate in catalysis. 2 residues coordinate phosphoenolpyruvate: Arg-289 and Arg-325. Mg(2+) contacts are provided by Glu-427 and Asp-451. Residues Asn-450–Asp-451 and Arg-461 contribute to the phosphoenolpyruvate site. Cys-498 acts as the Proton donor in catalysis.

This sequence belongs to the PEP-utilizing enzyme family. In terms of assembly, homodimer. Mg(2+) serves as cofactor.

The protein resides in the cytoplasm. The enzyme catalyses L-histidyl-[protein] + phosphoenolpyruvate = N(pros)-phospho-L-histidyl-[protein] + pyruvate. General (non sugar-specific) component of the phosphoenolpyruvate-dependent sugar phosphotransferase system (sugar PTS). This major carbohydrate active-transport system catalyzes the phosphorylation of incoming sugar substrates concomitantly with their translocation across the cell membrane. Enzyme I transfers the phosphoryl group from phosphoenolpyruvate (PEP) to the phosphoryl carrier protein (HPr). In Haloferax volcanii (strain ATCC 29605 / DSM 3757 / JCM 8879 / NBRC 14742 / NCIMB 2012 / VKM B-1768 / DS2) (Halobacterium volcanii), this protein is Phosphoenolpyruvate-protein phosphotransferase (ptsI).